The following is a 67-amino-acid chain: MKLLLLTLTVLLLLSQLTPGGTQRCWNLYGKCRYRCSKKERVYVYCINNKMCCVKPKYQPKERWWPF.

An N-terminal signal peptide occupies residues 1 to 20 (MKLLLLTLTVLLLLSQLTPG). 3 cysteine pairs are disulfide-bonded: Cys-25–Cys-52, Cys-32–Cys-46, and Cys-36–Cys-53.

The protein belongs to the beta-defensin family.

The protein resides in the secreted. Has antibacterial activity. This Gorilla gorilla gorilla (Western lowland gorilla) protein is Beta-defensin 123 (DEFB123).